The following is a 64-amino-acid chain: Large ribosomal subunit protein bL33 (64 aa).

The protein belongs to the bacterial ribosomal protein bL33 family.

The chain is Large ribosomal subunit protein bL33 from Crocosphaera subtropica (strain ATCC 51142 / BH68) (Cyanothece sp. (strain ATCC 51142)).